The primary structure comprises 109 residues: Spermidine export protein MdtI (109 aa).

4 consecutive transmembrane segments (helical) span residues 6-26 (WVHA…NVFL), 36-56 (IFGL…SQAV), 64-84 (AYAL…WILF), and 88-108 (LNRK…MVKL).

This sequence belongs to the drug/metabolite transporter (DMT) superfamily. Small multidrug resistance (SMR) (TC 2.A.7.1) family. MdtI subfamily. As to quaternary structure, forms a complex with MdtJ.

It localises to the cell inner membrane. Catalyzes the excretion of spermidine. The protein is Spermidine export protein MdtI of Escherichia coli O139:H28 (strain E24377A / ETEC).